Here is a 333-residue protein sequence, read N- to C-terminus: Viral cathepsin (333 aa).

The N-terminal stretch at 1 to 20 is a signal peptide; the sequence is MTKLLNFVILASVLTVTAHA. The propeptide at 21-124 is activation peptide; sequence LTYDLNNSDE…VIKDEPQALL (104 aa). Cystine bridges form between Cys145–Cys186, Cys179–Cys219, and Cys272–Cys321. Cys148 is an active-site residue. N-linked (GlcNAc...) asparagine; by host glycosylation is present at Asn170. Active-site residues include His280 and Asn300.

Belongs to the peptidase C1 family. In terms of processing, synthesized as an inactive proenzyme and activated by proteolytic removal of the inhibitory propeptide.

The catalysed reaction is Endopeptidase of broad specificity, hydrolyzing substrates of both cathepsin L and cathepsin B.. In terms of biological role, cysteine protease that plays an essential role in host liquefaction to facilitate horizontal transmission of the virus. May participate in the degradation of foreign protein expressed by the baculovirus system. This chain is Viral cathepsin (VCATH), found in Cydia pomonella granulosis virus (isolate Mexico/1963) (CpGV).